Here is a 791-residue protein sequence, read N- to C-terminus: Ribosome biogenesis protein ERB1 (791 aa).

Residues methionine 1 to glutamate 12 are compositionally biased toward polar residues. Disordered regions lie at residues methionine 1–aspartate 60 and alanine 68–glycine 87. 2 stretches are compositionally biased toward acidic residues: residues glutamate 25–aspartate 60 and glutamate 69–glycine 87. Residues arginine 254–serine 372 are required for interaction with NOP7. Positions serine 372–threonine 408 are required for interaction with YTM1. WD repeat units follow at residues glycine 424–glutamine 463, asparagine 472–glutamate 512, threonine 576–proline 618, lysine 621–lysine 659, proline 662–lysine 701, tyrosine 705–lysine 744, and valine 760–threonine 791.

It belongs to the WD repeat BOP1/ERB1 family. As to quaternary structure, component of the NOP7 complex, composed of ERB1, NOP7 and YTM1. The complex is held together by ERB1, which interacts with NOP7 via its N-terminal domain and with YTM1 via a high-affinity interaction between the seven-bladed beta-propeller domains of the 2 proteins. The NOP7 complex associates with the 66S pre-ribosome.

The protein resides in the nucleus. Its subcellular location is the nucleolus. The protein localises to the nucleoplasm. Functionally, component of the NOP7 complex, which is required for maturation of the 25S and 5.8S ribosomal RNAs and formation of the 60S ribosome. This chain is Ribosome biogenesis protein ERB1, found in Kluyveromyces lactis (strain ATCC 8585 / CBS 2359 / DSM 70799 / NBRC 1267 / NRRL Y-1140 / WM37) (Yeast).